The sequence spans 515 residues: Methionine--tRNA ligase (515 aa).

Positions 13-23 match the 'HIGH' region motif; sequence AYPNGKPHIGH. The short motif at 300 to 304 is the 'KMSKS' region element; the sequence is KMSKS. Lys-303 is a binding site for ATP.

Belongs to the class-I aminoacyl-tRNA synthetase family. MetG type 2B subfamily. Monomer.

It localises to the cytoplasm. It carries out the reaction tRNA(Met) + L-methionine + ATP = L-methionyl-tRNA(Met) + AMP + diphosphate. Functionally, is required not only for elongation of protein synthesis but also for the initiation of all mRNA translation through initiator tRNA(fMet) aminoacylation. This chain is Methionine--tRNA ligase, found in Brucella melitensis biotype 1 (strain ATCC 23456 / CCUG 17765 / NCTC 10094 / 16M).